Here is a 547-residue protein sequence, read N- to C-terminus: GMP synthase [glutamine-hydrolyzing] (547 aa).

A Glutamine amidotransferase type-1 domain is found at 12-210 (KILILDFGSQ…VLDIAGAKPD (199 aa)). Catalysis depends on cysteine 89, which acts as the Nucleophile. Active-site residues include histidine 184 and glutamate 186. One can recognise a GMPS ATP-PPase domain in the interval 211 to 403 (WIMRDHIEEA…LGLPAEMVYR (193 aa)). ATP is bound at residue 238 to 244 (SGGVDSS).

Homodimer.

The catalysed reaction is XMP + L-glutamine + ATP + H2O = GMP + L-glutamate + AMP + diphosphate + 2 H(+). It functions in the pathway purine metabolism; GMP biosynthesis; GMP from XMP (L-Gln route): step 1/1. Its function is as follows. Catalyzes the synthesis of GMP from XMP. The protein is GMP synthase [glutamine-hydrolyzing] of Burkholderia pseudomallei (strain 1710b).